The chain runs to 794 residues: Ubiquitin carboxyl-terminal hydrolase 10 (794 aa).

Ala2 carries the post-translational modification N-acetylalanine. The segment at 2 to 99 is interaction with p53/TP53; sequence ALHNPQYIFG…ILGCPTSKKT (98 aa). Residues 6-21 are G3BP1-binding; it reads PQYIFGDFSPDEFNQF. Thr24 and Thr99 each carry phosphothreonine. Positions 123–164 are disordered; that stretch reads ESSSNAEAETLENDSGAGGLGQRERKKKKKRPPGYYSYLKDG. Ser209, Ser224, and Ser316 each carry phosphoserine. A disordered region spans residues 303 to 326; it reads ESADLDPAKPESQSPPAESALSVS. Over residues 313-326 the composition is skewed to polar residues; the sequence is ESQSPPAESALSVS. At Ser332 the chain carries Phosphoserine; by ATM. Ser361 and Ser366 each carry phosphoserine. The USP domain maps to 411 to 791; it reads RGLINKGNWC…TAYLLYYRRV (381 aa). The active-site Nucleophile is the Cys420. Residue Ser543 is modified to Phosphoserine. The tract at residues 546-588 is disordered; that stretch reads HEKHSVSNGPGSHLIEDEELEDTGEGSEDEWEQVGPKNKTSVT. The span at 561-577 shows a compositional bias: acidic residues; it reads EDEELEDTGEGSEDEWE. Phosphothreonine is present on Thr568. Ser572 carries the phosphoserine modification. His745 acts as the Proton acceptor in catalysis.

It belongs to the peptidase C19 family. USP10 subfamily. As to quaternary structure, found in a deubiquitination complex with TANK, USP10 and ZC3H12A; this complex inhibits genotoxic stress- or interleukin-1-beta (IL1B)-mediated NF-kappa-B activation by promoting IKBKG or TRAF6 deubiquitination. Interacts with IKBKG; this interaction increases in response to DNA damage. Interacts with TANK; this interaction increases in response to DNA damage. Interacts with TRAF6; this interaction increases in response to DNA damage. Interacts with ZC3H12A; this interaction increases in response to DNA damage. Interacts with G3BP1 (via NTF2 domain) and G3BP2 (via NTF2 domain); inhibiting stress granule formation. In terms of processing, phosphorylated by ATM following DNA damage, leading to stabilization and translocation it to the nucleus. Post-translationally, ubiquitinated. Deubiquitinated by USP13.

It localises to the cytoplasm. The protein localises to the nucleus. The protein resides in the early endosome. It catalyses the reaction Thiol-dependent hydrolysis of ester, thioester, amide, peptide and isopeptide bonds formed by the C-terminal Gly of ubiquitin (a 76-residue protein attached to proteins as an intracellular targeting signal).. With respect to regulation, specifically inhibited by spautin-1 (specific and potent autophagy inhibitor-1), a derivative of MBCQ that binds to USP10 and inhibits deubiquitinase activity. Regulated by PIK3C3/VPS34-containing complexes. Its function is as follows. Hydrolase that can remove conjugated ubiquitin from target proteins such as p53/TP53, RPS2/us5, RPS3/us3, RPS10/eS10, BECN1, SNX3 and CFTR. Acts as an essential regulator of p53/TP53 stability: in unstressed cells, specifically deubiquitinates p53/TP53 in the cytoplasm, leading to counteract MDM2 action and stabilize p53/TP53. Following DNA damage, translocates to the nucleus and deubiquitinates p53/TP53, leading to regulate the p53/TP53-dependent DNA damage response. Component of a regulatory loop that controls autophagy and p53/TP53 levels: mediates deubiquitination of BECN1, a key regulator of autophagy, leading to stabilize the PIK3C3/VPS34-containing complexes. In turn, PIK3C3/VPS34-containing complexes regulate USP10 stability, suggesting the existence of a regulatory system by which PIK3C3/VPS34-containing complexes regulate p53/TP53 protein levels via USP10 and USP13. Does not deubiquitinate MDM2. Plays a key role in 40S ribosome subunit recycling when a ribosome has stalled during translation: acts both by inhibiting formation of stress granules, which store stalled translation pre-initiation complexes, and mediating deubiquitination of 40S ribosome subunits. Acts as a negative regulator of stress granules formation by lowering G3BP1 and G3BP2 valence, thereby preventing G3BP1 and G3BP2 ability to undergo liquid-liquid phase separation (LLPS) and assembly of stress granules. Promotes 40S ribosome subunit recycling following ribosome dissociation in response to ribosome stalling by mediating deubiquitination of 40S ribosomal proteins RPS2/us5, RPS3/us3 and RPS10/eS10, thereby preventing their degradation by the proteasome. Part of a ribosome quality control that takes place when ribosomes have stalled during translation initiation (iRQC): USP10 acts by removing monoubiquitination of RPS2/us5 and RPS3/us3, promoting 40S ribosomal subunit recycling. Deubiquitinates CFTR in early endosomes, enhancing its endocytic recycling. Involved in a TANK-dependent negative feedback response to attenuate NF-kappa-B activation via deubiquitinating IKBKG or TRAF6 in response to interleukin-1-beta (IL1B) stimulation or upon DNA damage. Deubiquitinates TBX21 leading to its stabilization. Plays a negative role in the RLR signaling pathway upon RNA virus infection by blocking the RIGI-mediated MAVS activation. Mechanistically, removes the unanchored 'Lys-63'-linked polyubiquitin chains of MAVS to inhibit its aggregation, essential for its activation. The chain is Ubiquitin carboxyl-terminal hydrolase 10 (Usp10) from Rattus norvegicus (Rat).